Consider the following 269-residue polypeptide: Ribonuclease HII (269 aa).

Positions 28-222 (RHVAGADEAG…VSGRRGAPPR (195 aa)) constitute an RNase H type-2 domain. A divalent metal cation-binding residues include D34, E35, and D128.

It belongs to the RNase HII family. It depends on Mn(2+) as a cofactor. The cofactor is Mg(2+).

It localises to the cytoplasm. It carries out the reaction Endonucleolytic cleavage to 5'-phosphomonoester.. Its function is as follows. Endonuclease that specifically degrades the RNA of RNA-DNA hybrids. This chain is Ribonuclease HII, found in Salinispora arenicola (strain CNS-205).